Consider the following 387-residue polypeptide: Protein-glutamate methylesterase/protein-glutamine glutaminase 2 (387 aa).

Residues lysine 4–leucine 121 form the Response regulatory domain. At aspartate 55 the chain carries 4-aspartylphosphate. Positions alanine 148–alanine 183 are enriched in low complexity. The interval alanine 148–lysine 199 is disordered. Residues proline 192–glutamate 384 form the CheB-type methylesterase domain. Catalysis depends on residues serine 211, histidine 238, and aspartate 331.

The protein belongs to the CheB family. Post-translationally, phosphorylated by CheA. Phosphorylation of the N-terminal regulatory domain activates the methylesterase activity.

The protein localises to the cytoplasm. It carries out the reaction [protein]-L-glutamate 5-O-methyl ester + H2O = L-glutamyl-[protein] + methanol + H(+). The enzyme catalyses L-glutaminyl-[protein] + H2O = L-glutamyl-[protein] + NH4(+). Functionally, involved in chemotaxis. Part of a chemotaxis signal transduction system that modulates chemotaxis in response to various stimuli. Catalyzes the demethylation of specific methylglutamate residues introduced into the chemoreceptors (methyl-accepting chemotaxis proteins or MCP) by CheR. Also mediates the irreversible deamidation of specific glutamine residues to glutamic acid. In Pseudomonas savastanoi pv. phaseolicola (strain 1448A / Race 6) (Pseudomonas syringae pv. phaseolicola (strain 1448A / Race 6)), this protein is Protein-glutamate methylesterase/protein-glutamine glutaminase 2.